A 301-amino-acid polypeptide reads, in one-letter code: Retinochrome (301 aa).

Residues Met1–Glu17 are Extracellular-facing. A helical transmembrane segment spans residues His18–Leu43. Residues Ala44–Tyr54 lie on the Cytoplasmic side of the membrane. The helical transmembrane segment at Ala55 to Ser76 threads the bilayer. Topologically, residues Ser77 to Gly94 are extracellular. Residues Phe95–Cys120 traverse the membrane as a helical segment. At His121–Tyr132 the chain is on the cytoplasmic side. A helical membrane pass occupies residues Tyr133 to Leu153. Residues Gly154 to Ser180 lie on the Extracellular side of the membrane. Asn170 carries N-linked (GlcNAc...) asparagine glycosylation. The chain crosses the membrane as a helical span at residues Tyr181–Leu208. The Cytoplasmic portion of the chain corresponds to Ser209–Ala230. The helical transmembrane segment at Leu231 to Leu255 threads the bilayer. Over Thr256–His264 the chain is Extracellular. A helical membrane pass occupies residues Leu265–Thr289. Lys275 carries the N6-(retinylidene)lysine modification. The Cytoplasmic segment spans residues Ala290–Pro301.

The protein belongs to the G-protein coupled receptor 1 family. Opsin subfamily. Mainly stored in myeloid bodies of the inner segments.

Its subcellular location is the membrane. In terms of biological role, retinochrome is capable of acting as an effective catalyst in the light to convert various isomers of retinal into 11-cis, the form that is required by opsin to resynthesize rhodopsin. This chain is Retinochrome, found in Todarodes pacificus (Japanese flying squid).